A 308-amino-acid polypeptide reads, in one-letter code: Elongation factor Ts (308 aa).

The involved in Mg(2+) ion dislocation from EF-Tu stretch occupies residues 80 to 83 (TDFV).

The protein belongs to the EF-Ts family.

It is found in the cytoplasm. Functionally, associates with the EF-Tu.GDP complex and induces the exchange of GDP to GTP. It remains bound to the aminoacyl-tRNA.EF-Tu.GTP complex up to the GTP hydrolysis stage on the ribosome. This Agrobacterium fabrum (strain C58 / ATCC 33970) (Agrobacterium tumefaciens (strain C58)) protein is Elongation factor Ts.